The chain runs to 555 residues: Carboxypeptidase Y homolog A (555 aa).

The N-terminal stretch at Met-1–Thr-17 is a signal peptide. Residues Tyr-18 to Lys-136 constitute a propeptide that is removed on maturation. 5 cysteine pairs are disulfide-bonded: Cys-191/Cys-430, Cys-325/Cys-339, Cys-349/Cys-372, Cys-356/Cys-365, and Cys-394/Cys-400. Residue Asn-222 is glycosylated (N-linked (GlcNAc...) asparagine). The active site involves Ser-278. The active site involves Asp-469. An N-linked (GlcNAc...) asparagine glycan is attached at Asn-520. His-531 is a catalytic residue.

It belongs to the peptidase S10 family.

It localises to the vacuole. The catalysed reaction is Release of a C-terminal amino acid with broad specificity.. In terms of biological role, vacuolar carboxypeptidase involved in degradation of small peptides. Digests preferentially peptides containing an aliphatic or hydrophobic residue in P1' position, as well as methionine, leucine or phenylalanine in P1 position of ester substrate. This is Carboxypeptidase Y homolog A (cpyA) from Talaromyces marneffei (strain ATCC 18224 / CBS 334.59 / QM 7333) (Penicillium marneffei).